A 99-amino-acid polypeptide reads, in one-letter code: Large ribosomal subunit protein eL30 (99 aa).

The protein belongs to the eukaryotic ribosomal protein eL30 family.

This chain is Large ribosomal subunit protein eL30, found in Methanobrevibacter smithii (strain ATCC 35061 / DSM 861 / OCM 144 / PS).